The following is a 101-amino-acid chain: Small ribosomal subunit protein uS14 (101 aa).

It belongs to the universal ribosomal protein uS14 family. In terms of assembly, part of the 30S ribosomal subunit. Contacts proteins S3 and S10.

In terms of biological role, binds 16S rRNA, required for the assembly of 30S particles and may also be responsible for determining the conformation of the 16S rRNA at the A site. The sequence is that of Small ribosomal subunit protein uS14 from Paenarthrobacter aurescens (strain TC1).